Consider the following 516-residue polypeptide: GMP synthase [glutamine-hydrolyzing] (516 aa).

Residues Lys6–Asp198 enclose the Glutamine amidotransferase type-1 domain. The Nucleophile role is filled by Cys83. Active-site residues include His172 and Glu174. The region spanning Trp199–Arg391 is the GMPS ATP-PPase domain. Ser227–Thr233 contacts ATP.

As to quaternary structure, homodimer.

The catalysed reaction is XMP + L-glutamine + ATP + H2O = GMP + L-glutamate + AMP + diphosphate + 2 H(+). The protein operates within purine metabolism; GMP biosynthesis; GMP from XMP (L-Gln route): step 1/1. In terms of biological role, catalyzes the synthesis of GMP from XMP. The sequence is that of GMP synthase [glutamine-hydrolyzing] from Oleidesulfovibrio alaskensis (strain ATCC BAA-1058 / DSM 17464 / G20) (Desulfovibrio alaskensis).